The sequence spans 401 residues: Nodal homolog 3-B (401 aa).

The N-terminal stretch at M1–A18 is a signal peptide. Residues M19 to R274 constitute a propeptide that is removed on maturation. N-linked (GlcNAc...) asparagine glycosylation is found at N168, N337, N341, and N344. Disulfide bonds link C299–C365 and C328–C396.

This sequence belongs to the TGF-beta family. As to quaternary structure, monomer. The propeptide region interacts with bmp4 in a non-covalent manner. Expressed in the dorsal marginal region of late blastula, becoming restricted to the dorsal blastopore lip (Spemann organizer) at the early gastrula stage.

The protein resides in the secreted. In terms of biological role, exhibits mesoderm-dorsalizing activity and neural-inducing activity, but lacks mesoderm-inducing activity. Regulates the expression of specific mesodermal and neural genes. Induces convergent extension movements at the embryonic midline by activating the fgf signaling pathway to induce t/bra expression in the organizer region. Acts with wnt11 to induce Spemann organizer cells and induce axis formation. The unprocessed protein antagonizes bmp-signaling. In Xenopus laevis (African clawed frog), this protein is Nodal homolog 3-B (nodal3-b).